A 219-amino-acid polypeptide reads, in one-letter code: Probable nicotinate-nucleotide adenylyltransferase (219 aa).

Belongs to the NadD family.

The catalysed reaction is nicotinate beta-D-ribonucleotide + ATP + H(+) = deamido-NAD(+) + diphosphate. It functions in the pathway cofactor biosynthesis; NAD(+) biosynthesis; deamido-NAD(+) from nicotinate D-ribonucleotide: step 1/1. In terms of biological role, catalyzes the reversible adenylation of nicotinate mononucleotide (NaMN) to nicotinic acid adenine dinucleotide (NaAD). This chain is Probable nicotinate-nucleotide adenylyltransferase, found in Enterococcus faecalis (strain ATCC 700802 / V583).